We begin with the raw amino-acid sequence, 624 residues long: D-3-phosphoglycerate dehydrogenase 2, chloroplastic (624 aa).

Residues 1–49 constitute a chloroplast transit peptide; sequence MAFSSSCSSVKAVNSRWTSPSPSPSSRFAVLPAFLHRRYATSVKLTAIS. S71 is subject to Phosphoserine. NAD(+) is bound by residues 231-232, D251, 310-312, and D336; these read KV and VAR. R312 is an active-site residue. E341 is a catalytic residue. H360 (proton donor) is an active-site residue. 360 to 363 is an NAD(+) binding site; sequence HLGA. In terms of domain architecture, ACT spans 552–624; sequence LILCRQVDQP…AIEEFVFLKL (73 aa).

This sequence belongs to the D-isomer specific 2-hydroxyacid dehydrogenase family. As to expression, ubiquitous, but highly expressed in roots and in dark-grown leaf tissues. Expressed in the vasculature, stigma, anther filaments and shoot apical meristem. Not detected in the root meristem or in embryo.

It is found in the plastid. The protein localises to the chloroplast. It catalyses the reaction (2R)-3-phosphoglycerate + NAD(+) = 3-phosphooxypyruvate + NADH + H(+). It participates in amino-acid biosynthesis; L-serine biosynthesis; L-serine from 3-phospho-D-glycerate: step 1/3. With respect to regulation, inhibited by 90 uM 3-phosphonooxypyruvate, but not by Ser, Thr, Val, Gly Trp, O-acetyl-L-Ser and Cys. In terms of biological role, involved in the plastidial phosphorylated pathway of serine biosynthesis (PPSB). This Arabidopsis thaliana (Mouse-ear cress) protein is D-3-phosphoglycerate dehydrogenase 2, chloroplastic (PGDH2).